Reading from the N-terminus, the 454-residue chain is Asparagine--tRNA ligase (454 aa).

This sequence belongs to the class-II aminoacyl-tRNA synthetase family. As to quaternary structure, homodimer.

The protein resides in the cytoplasm. The enzyme catalyses tRNA(Asn) + L-asparagine + ATP = L-asparaginyl-tRNA(Asn) + AMP + diphosphate + H(+). In Mesoplasma florum (strain ATCC 33453 / NBRC 100688 / NCTC 11704 / L1) (Acholeplasma florum), this protein is Asparagine--tRNA ligase.